A 314-amino-acid polypeptide reads, in one-letter code: Thymidylate synthase (314 aa).

Residues Arg21 and 176-177 (RR) contribute to the dUMP site. The active-site Nucleophile is Cys196. Residues 216–219 (RSAD), Asn227, and 257–259 (HLY) each bind dUMP. Asp219 provides a ligand contact to (6R)-5,10-methylene-5,6,7,8-tetrahydrofolate. Ser313 contacts (6R)-5,10-methylene-5,6,7,8-tetrahydrofolate.

This sequence belongs to the thymidylate synthase family. Bacterial-type ThyA subfamily. As to quaternary structure, homodimer.

Its subcellular location is the cytoplasm. It catalyses the reaction dUMP + (6R)-5,10-methylene-5,6,7,8-tetrahydrofolate = 7,8-dihydrofolate + dTMP. It functions in the pathway pyrimidine metabolism; dTTP biosynthesis. Catalyzes the reductive methylation of 2'-deoxyuridine-5'-monophosphate (dUMP) to 2'-deoxythymidine-5'-monophosphate (dTMP) while utilizing 5,10-methylenetetrahydrofolate (mTHF) as the methyl donor and reductant in the reaction, yielding dihydrofolate (DHF) as a by-product. This enzymatic reaction provides an intracellular de novo source of dTMP, an essential precursor for DNA biosynthesis. The polypeptide is Thymidylate synthase (Listeria monocytogenes serotype 4a (strain HCC23)).